The sequence spans 260 residues: Small ribosomal subunit protein uS3 (260 aa).

Positions 39-114 (LRQYIEQKLG…QIRINVVEVQ (76 aa)) constitute a KH type-2 domain. A disordered region spans residues 218 to 260 (QEVATPPPSPRDRDRDRGDRDREPRRRQQQRRRQQFEDRSNEG). Composition is skewed to basic and acidic residues over residues 227-243 (PRDR…EPRR) and 251-260 (QQFEDRSNEG).

Belongs to the universal ribosomal protein uS3 family. Part of the 30S ribosomal subunit. Forms a tight complex with proteins S10 and S14.

Binds the lower part of the 30S subunit head. Binds mRNA in the 70S ribosome, positioning it for translation. The protein is Small ribosomal subunit protein uS3 of Nostoc sp. (strain PCC 7120 / SAG 25.82 / UTEX 2576).